Consider the following 63-residue polypeptide: Conotoxin LeDr243 (63 aa).

A signal peptide spans M1 to A22. The propeptide occupies R23–S47. At C60 the chain carries Cysteine amide. A propeptide spanning residues L62–G63 is cleaved from the precursor.

The protein belongs to the conotoxin T superfamily. Post-translationally, contains 2 disulfide bonds that can be either 'C1-C3, C2-C4' or 'C1-C4, C2-C3', since these disulfide connectivities have been observed for conotoxins with cysteine framework V (for examples, see AC P0DQQ7 and AC P81755). Expressed by the venom duct.

The protein resides in the secreted. This is Conotoxin LeDr243 from Conus litteratus (Lettered cone).